Here is a 156-residue protein sequence, read N- to C-terminus: AP-1 complex subunit sigma-1 (156 aa).

Belongs to the adaptor complexes small subunit family. Adapter protein complex 1 (AP-1) is a heterotetramer composed of two large adaptins (gamma-type subunit APL4 and beta-type subunit APL2), a medium adaptin (mu-type subunit APM1) and a small adaptin (sigma-type subunit APS1). AP-1 interacts with clathrin. Also a component of the AP-1R complex composed of at least APM2, APL4 and APS1.

The protein localises to the cytoplasm. It is found in the nucleus. Its subcellular location is the cytoplasmic vesicle. The protein resides in the clathrin-coated vesicle membrane. It localises to the endosome. The protein localises to the golgi apparatus. Its function is as follows. Component of the adapter complexes which link clathrin to receptors in coated vesicles. Clathrin-associated protein complexes are believed to interact with the cytoplasmic tails of membrane proteins, leading to their selection and concentration. AP19 is probably a subunit of the Golgi membrane adapter. Component of the AP-1-related (AP-1R) complex, an adapter protein complex that mediates sorting of cargo SNARE SNC1. In contrast to the APM1-containing AP-1 complex, AP-1R is incapable of sorting CHS3. The chain is AP-1 complex subunit sigma-1 (APS1) from Saccharomyces cerevisiae (strain ATCC 204508 / S288c) (Baker's yeast).